We begin with the raw amino-acid sequence, 1041 residues long: Nuclear pore complex protein NUP98A (1041 aa).

The span at 1–34 (MFGSSNPFGQSSGTSPFGSQSLFGQTSNTSSNNP) shows a compositional bias: polar residues. The tract at residues 1 to 44 (MFGSSNPFGQSSGTSPFGSQSLFGQTSNTSSNNPFAPATPFGTS) is disordered. Repeat copies occupy residues 2-3 (FG), 8-9 (FG), 17-18 (FG), 23-24 (FG), 41-42 (FG), 56-57 (FG), 64-65 (FG), 79-80 (FG), 87-88 (FG), 94-95 (FG), 103-104 (FG), 109-110 (FG), 124-125 (FG), 135-136 (FG), 140-141 (FG), 146-147 (FG), 154-155 (FG), 162-163 (FG), 170-171 (FG), 178-179 (FG), 186-187 (FG), 194-195 (FG), 202-203 (FG), 210-211 (FG), 217-218 (FG), 222-223 (FG), 228-229 (FG), 236-237 (FG), 244-245 (FG), 252-253 (FG), 260-261 (FG), 268-269 (FG), 276-277 (FG), 284-285 (FG), 294-295 (FG), 300-301 (FG), 307-308 (FG), 312-313 (FG), 319-320 (FG), 329-330 (FG), 334-335 (FG), 339-340 (FG), 411-412 (FG), and 427-428 (FG). The segment at 2–677 (FGSSNPFGQS…QPVAVTNPFG (676 aa)) is 65 X 2 AA repeats of F-G. The interval 98–171 (PASSPFGGSS…FGATSTPSFG (74 aa)) is disordered. Polar residues predominate over residues 117–171 (STPQSNPFGNSTQQSQPAFGNTSFGSSTPFGATNTPAFGAPSTPSFGATSTPSFG). 2 disordered regions span residues 315–347 (TPSP…GGSR) and 392–447 (QRGD…TNPF). Residues 430–447 (TSANPTNPFSSSTSTNPF) are compositionally biased toward low complexity. 21 consecutive repeat copies span residues 459 to 460 (FG), 466 to 467 (FG), 471 to 472 (FG), 480 to 481 (FG), 491 to 492 (FG), 497 to 498 (FG), 506 to 507 (FG), 514 to 515 (FG), 521 to 522 (FG), 533 to 534 (FG), 555 to 556 (FG), 562 to 563 (FG), 565 to 566 (FG), 573 to 574 (FG), 586 to 587 (FG), 604 to 605 (FG), 627 to 628 (FG), 632 to 633 (FG), 650 to 651 (FG), 655 to 656 (FG), and 676 to 677 (FG). Low complexity predominate over residues 517–526 (SSSIFGSAPG). Positions 517–560 (SSSIFGSAPGQGATPAFGNSQPSTLFNSTPSTGQTGSAFGQTGS) are disordered. A compositionally biased stretch (polar residues) spans 533–560 (FGNSQPSTLFNSTPSTGQTGSAFGQTGS). The disordered stretch occupies residues 734-860 (KYRPGENGPK…KERPYKTLSG (127 aa)). Over residues 782–793 (SRDKSILPKEQR) the composition is skewed to basic and acidic residues. Positions 831–846 (TSVNANQKPNGTTRSD) are enriched in polar residues. The 143-residue stretch at 885–1027 (QSDYFTEPRI…GEWKFRVEHF (143 aa)) folds into the Peptidase S59 domain.

Belongs to the nucleoporin GLFG family. Part of the nuclear pore complex (NPC). The NPC has an eight-fold symmetrical structure comprising a central transport channel and two rings, the cytoplasmic and nuclear rings, to which eight filaments are attached. The cytoplasmic filaments have loose ends, while the nuclear filaments are joined in a distal ring, forming a nuclear basket. NPCs are highly dynamic in configuration and composition, and can be devided in 3 subcomplexes, the NUP62 subcomplex, the NUP107-160 subcomplex and the NUP93 subcomplex, containing approximately 30 different nucleoporin proteins.

It is found in the nucleus. The protein localises to the nuclear pore complex. The protein is Nuclear pore complex protein NUP98A of Arabidopsis thaliana (Mouse-ear cress).